The primary structure comprises 399 residues: Protein shisa-8 (399 aa).

Residues 1–36 (MERAGARGQRCGRRSHGLPLALRLALLLAGSPSGRA) form the signal peptide. The Extracellular segment spans residues 37 to 136 (GAPEEQEIAG…APRDPARERS (100 aa)). The N-linked (GlcNAc...) asparagine glycan is linked to Asn-73. The chain crosses the membrane as a helical span at residues 137 to 157 (HTAVYAVCGVAALLVLVGIGA). Topologically, residues 158 to 399 (RLGLERAHSP…STNSKAEVTV (242 aa)) are cytoplasmic. 2 disordered regions span residues 207–248 (GDGV…GGSL) and 378–399 (FYSS…EVTV). The span at 389–399 (LSTNSKAEVTV) shows a compositional bias: polar residues.

This sequence belongs to the shisa family. In terms of assembly, interacts with AMPAR subunits GRIA1 and GRIA2. In terms of tissue distribution, brain-specific. Highly expressed in cerebellum and olfactory bulb.

The protein localises to the membrane. May regulate trafficking and current kinetics of AMPA-type glutamate receptor (AMPAR) at synapses. This is Protein shisa-8 from Mus musculus (Mouse).